Consider the following 218-residue polypeptide: Thiopurine S-methyltransferase (218 aa).

S-adenosyl-L-methionine contacts are provided by W11, L46, E67, and R122.

Belongs to the class I-like SAM-binding methyltransferase superfamily. TPMT family.

It is found in the cytoplasm. The enzyme catalyses S-adenosyl-L-methionine + a thiopurine = S-adenosyl-L-homocysteine + a thiopurine S-methylether.. In Vibrio cholerae serotype O1 (strain ATCC 39315 / El Tor Inaba N16961), this protein is Thiopurine S-methyltransferase.